The following is a 324-amino-acid chain: Hairy/enhancer-of-split related with YRPW motif protein 2 (324 aa).

Residues 1-34 (MKRPCEDSTSDSDMDETIDVGSENNYSGQSNGSF) form a disordered region. A compositionally biased stretch (acidic residues) spans 8-18 (STSDSDMDETI). Polar residues predominate over residues 22 to 34 (SENNYSGQSNGSF). The bHLH domain occupies 48 to 103 (ARKKRRGIIEKRRRDRINNSLSELRRLVPTAFEKQGSAKLEKAEILQMTVDHLKML). Residues 122–157 (LSIGFRECLTEVARYLSSVEGLDSSDPLRVRLVSHL) form the Orange domain. Over residues 294–311 (SSSVSTSTTSQQSSGSSS) the composition is skewed to low complexity. Residues 294–324 (SSSVSTSTTSQQSSGSSSKPYRPWGTEVGAF) form a disordered region. The YRPW motif signature appears at 314–317 (YRPW).

It belongs to the HEY family.

Its subcellular location is the nucleus. In terms of biological role, transcriptional repressor. Downstream effector of Notch signaling which regulates cell fate choice in angioblasts. Represses the venous cell fate, thereby promoting the arterial cell fate and aorta formation. In Danio rerio (Zebrafish), this protein is Hairy/enhancer-of-split related with YRPW motif protein 2 (hey2).